A 364-amino-acid polypeptide reads, in one-letter code: Serine/threonine-protein kinase ENV7 (364 aa).

Residues cysteine 13, cysteine 14, and cysteine 15 are each lipidated (S-palmitoyl cysteine). The Protein kinase domain occupies 30 to 364 (YRIQRLLGEG…LLNLLQDLDT (335 aa)). Residues 36–44 (LGEGGMSFV) and lysine 69 contribute to the ATP site. Aspartate 215 serves as the catalytic Proton acceptor.

The protein belongs to the protein kinase superfamily. Ser/Thr protein kinase family.

It localises to the vacuole membrane. It catalyses the reaction L-seryl-[protein] + ATP = O-phospho-L-seryl-[protein] + ADP + H(+). The enzyme catalyses L-threonyl-[protein] + ATP = O-phospho-L-threonyl-[protein] + ADP + H(+). In terms of biological role, serine/threonine-protein kinase involved in vacuolar processing and morphology. The chain is Serine/threonine-protein kinase ENV7 (ENV7) from Saccharomyces cerevisiae (strain ATCC 204508 / S288c) (Baker's yeast).